The chain runs to 157 residues: MLTHLDSQGRAHMVDVTDKSVTFREAVAEARVRMLPETLKMIVDGAHPKGDVFAVARIAGIQAAKKTSDLIPLCHPLMLTGVKVELSADGADSVHIVARCKLSGQTGVEMEALTAASVAALTIYDMCKAVDRGMTIESIRLLEKLGGKSGHFKADQA.

Residues leucine 73–histidine 75 and methionine 110–glutamate 111 each bind substrate. Residue aspartate 125 is part of the active site.

The protein belongs to the MoaC family. As to quaternary structure, homohexamer; trimer of dimers.

The enzyme catalyses (8S)-3',8-cyclo-7,8-dihydroguanosine 5'-triphosphate = cyclic pyranopterin phosphate + diphosphate. It participates in cofactor biosynthesis; molybdopterin biosynthesis. In terms of biological role, catalyzes the conversion of (8S)-3',8-cyclo-7,8-dihydroguanosine 5'-triphosphate to cyclic pyranopterin monophosphate (cPMP). The protein is Cyclic pyranopterin monophosphate synthase of Pseudomonas fluorescens (strain SBW25).